Consider the following 382-residue polypeptide: MAP kinase-activated protein kinase 3 (382 aa).

Met1 carries the post-translational modification N-acetylmethionine. Positions 1-34 are disordered; it reads MDGETAEEQGGPVPPPVAPGGPGLGGAPGGRREP. Gly residues predominate over residues 20 to 29; it reads GGPGLGGAPG. A Protein kinase domain is found at 44–304; the sequence is QLSKQVLGLG…ITQFMNHPWI (261 aa). ATP contacts are provided by residues 50-58 and Lys73; that span reads LGLGVNGKV. Asp166 serves as the catalytic Proton acceptor. Thr201 bears the Phosphothreonine; by MAPK14 mark. Ser251 carries the phosphoserine; by MAPK14 modification. Ser307 is modified (phosphoserine; by autocatalysis). The interval 307 to 343 is autoinhibitory helix; that stretch reads SMVVPQTPLHTARVLQEDKDHWDEVKEEMTSALATMR. Phosphothreonine; by MAPK14 is present on Thr313. Positions 335-344 match the Nuclear export signal (NES) motif; the sequence is MTSALATMRV. The p38 MAPK-binding site stretch occupies residues 345-369; sequence DYDQVKIKDLKTSNNRLLNKRRKKQ. 2 short sequence motifs (bipartite nuclear localization signal) span residues 350 to 353 and 364 to 368; these read KIKD and KRRKK. Residues 357 to 382 are disordered; that stretch reads SNNRLLNKRRKKQAGSSSASQGCNNQ. The segment covering 370–382 has biased composition (polar residues); sequence AGSSSASQGCNNQ.

It belongs to the protein kinase superfamily. CAMK Ser/Thr protein kinase family. In terms of assembly, heterodimer with p38-alpha/MAPK14. The heterodimer with p38-alpha/MAPK14 forms a stable complex: molecules are positioned 'face to face' so that the ATP-binding sites of both kinases are at the heterodimer interface. Interacts with TCF3 and with polycomb proteins, such as PCH2 and BMI1/PCGF4. In terms of processing, phosphorylated and activated by MAPK1/ERK2 and MAPK3/ERK1. Phosphorylated and activated by MAP kinase p38-alpha/MAPK14 at Thr-201, Ser-251 and Thr-313. In terms of tissue distribution, widely expressed, with a higher expression level observed in heart and skeletal muscle. No expression in brain. Expressed in the retinal pigment epithelium.

It localises to the nucleus. The protein localises to the cytoplasm. It carries out the reaction L-seryl-[protein] + ATP = O-phospho-L-seryl-[protein] + ADP + H(+). It catalyses the reaction L-threonyl-[protein] + ATP = O-phospho-L-threonyl-[protein] + ADP + H(+). Its activity is regulated as follows. Activated following phosphorylation by p38-alpha/MAPK14 following various stresses. Inhibited by ligand 5B (2'-[2-(1,3-benzodioxol-5-yl)pyrimidin-4-yl]-5',6'-dihydrospiro[piperidine-4,7'-pyrrolo[3,2-c]pyridin]- 4'(1'h)-one) and ligand P4O (2-[2-(2-fluorophenyl)pyridin-4-yl]-1,5,6,7-tetrahydro- 4h-pyrrolo[3,2-c]pyridin-4-one), 2 ATP-competitive inhibitors. Its function is as follows. Stress-activated serine/threonine-protein kinase involved in cytokines production, endocytosis, cell migration, chromatin remodeling and transcriptional regulation. Following stress, it is phosphorylated and activated by MAP kinase p38-alpha/MAPK14, leading to phosphorylation of substrates. Phosphorylates serine in the peptide sequence, Hyd-X-R-X(2)-S, where Hyd is a large hydrophobic residue. MAPKAPK2 and MAPKAPK3, share the same function and substrate specificity, but MAPKAPK3 kinase activity and level in protein expression are lower compared to MAPKAPK2. Phosphorylates HSP27/HSPB1, KRT18, KRT20, RCSD1, RPS6KA3, TAB3 and TTP/ZFP36. Mediates phosphorylation of HSP27/HSPB1 in response to stress, leading to dissociate HSP27/HSPB1 from large small heat-shock protein (sHsps) oligomers and impair their chaperone activities and ability to protect against oxidative stress effectively. Involved in inflammatory response by regulating tumor necrosis factor (TNF) and IL6 production post-transcriptionally: acts by phosphorylating AU-rich elements (AREs)-binding proteins, such as TTP/ZFP36, leading to regulate the stability and translation of TNF and IL6 mRNAs. Phosphorylation of TTP/ZFP36, a major post-transcriptional regulator of TNF, promotes its binding to 14-3-3 proteins and reduces its ARE mRNA affinity leading to inhibition of dependent degradation of ARE-containing transcript. Involved in toll-like receptor signaling pathway (TLR) in dendritic cells: required for acute TLR-induced macropinocytosis by phosphorylating and activating RPS6KA3. Also acts as a modulator of Polycomb-mediated repression. This chain is MAP kinase-activated protein kinase 3 (MAPKAPK3), found in Homo sapiens (Human).